A 260-amino-acid chain; its full sequence is 5'-nucleotidase SurE (260 aa).

A divalent metal cation is bound by residues D10, D11, S41, and N95.

The protein belongs to the SurE nucleotidase family. The cofactor is a divalent metal cation.

Its subcellular location is the cytoplasm. It catalyses the reaction a ribonucleoside 5'-phosphate + H2O = a ribonucleoside + phosphate. In terms of biological role, nucleotidase that shows phosphatase activity on nucleoside 5'-monophosphates. This Methanoregula boonei (strain DSM 21154 / JCM 14090 / 6A8) protein is 5'-nucleotidase SurE.